Consider the following 79-residue polypeptide: Acyl carrier protein (79 aa).

The Carrier domain occupies 2–77 (DNIEQRVKKI…QAIDYATAHV (76 aa)). At S37 the chain carries O-(pantetheine 4'-phosphoryl)serine.

This sequence belongs to the acyl carrier protein (ACP) family. Post-translationally, 4'-phosphopantetheine is transferred from CoA to a specific serine of apo-ACP by AcpS. This modification is essential for activity because fatty acids are bound in thioester linkage to the sulfhydryl of the prosthetic group.

It localises to the cytoplasm. The protein operates within lipid metabolism; fatty acid biosynthesis. Functionally, carrier of the growing fatty acid chain in fatty acid biosynthesis. The protein is Acyl carrier protein of Cupriavidus pinatubonensis (strain JMP 134 / LMG 1197) (Cupriavidus necator (strain JMP 134)).